The sequence spans 184 residues: Protein PLANT CADMIUM RESISTANCE 5 (184 aa).

The segment covering 1 to 26 (MGRPVGQTNQAQPSVQHTASPSNKVS) has biased composition (polar residues). The segment at 1 to 33 (MGRPVGQTNQAQPSVQHTASPSNKVSHNGGIGK) is disordered. Residues 94 to 114 (AGLLYGALFFTGASFVYSYMF) traverse the membrane as a helical segment.

This sequence belongs to the cornifelin family.

It localises to the membrane. May be involved in heavy metals transport. The sequence is that of Protein PLANT CADMIUM RESISTANCE 5 (PCR5) from Arabidopsis thaliana (Mouse-ear cress).